The chain runs to 56 residues: Botcinic acid biosynthesis cluster B protein 14 (56 aa).

It participates in polyketide biosynthesis. Part of the gene cluster B that mediates the biosynthesis of botcinic acid and its botcinin derivatives, acetate-derived polyketides that contribute to virulence when combined with the sesquiterpene botrydial. Botcinic acid and its derivatives have been shown to induce chlorosis and necrosis during host plant infection, but also have antifungal activities. Two polyketide synthases, BOA6 and BOA9, are involved in the biosynthesis of botcinins. BOA6 mediates the formation of the per-methylated tetraketide core by condensation of four units of malonyl-CoA with one unit of acetyl-CoA, which would be methylated in activated methylene groups to yield a bicyclic acid intermediate that could then either be converted to botrylactone derivatives or lose the starter acetate unit through a retro-Claisen type C-C bond cleavage to yield botcinin derivatives. The second polyketide synthase, BOA9, is probably required for the biosynthesis of the tetraketide side chain of botcinins. The methyltransferase (MT) domain within BOA6 is probably responsible for the incorporation of four methyl groups. The trans-enoyl reductase BOA5 might take over the enoyl reductase function of BOA6 that misses an ER domain. The monooxygenases BOA2, BOA3 and BOA4 might be involved in further hydroxylations at C4, C5 and C8, whereas BOA7, close to BOA9, could potentially be involved in the hydroxylation at C4 in the side chain of botcinins. The chain is Botcinic acid biosynthesis cluster B protein 14 from Botryotinia fuckeliana (strain B05.10) (Noble rot fungus).